We begin with the raw amino-acid sequence, 445 residues long: UDP-N-acetylmuramoylalanine--D-glutamate ligase (445 aa).

Residue 117–123 (GSNGKTT) coordinates ATP.

This sequence belongs to the MurCDEF family.

The protein localises to the cytoplasm. The enzyme catalyses UDP-N-acetyl-alpha-D-muramoyl-L-alanine + D-glutamate + ATP = UDP-N-acetyl-alpha-D-muramoyl-L-alanyl-D-glutamate + ADP + phosphate + H(+). It participates in cell wall biogenesis; peptidoglycan biosynthesis. Its function is as follows. Cell wall formation. Catalyzes the addition of glutamate to the nucleotide precursor UDP-N-acetylmuramoyl-L-alanine (UMA). The protein is UDP-N-acetylmuramoylalanine--D-glutamate ligase of Neisseria meningitidis serogroup C (strain 053442).